We begin with the raw amino-acid sequence, 1235 residues long: Ubiquitin carboxyl-terminal hydrolase 40 (1235 aa).

A USP domain is found at 41–482 (SGIRNQGGTC…SAYMLFYRKA (442 aa)). Catalysis depends on C50, which acts as the Nucleophile. H305 serves as the catalytic Proton acceptor.

Belongs to the peptidase C19 family.

It carries out the reaction Thiol-dependent hydrolysis of ester, thioester, amide, peptide and isopeptide bonds formed by the C-terminal Gly of ubiquitin (a 76-residue protein attached to proteins as an intracellular targeting signal).. This Mus musculus (Mouse) protein is Ubiquitin carboxyl-terminal hydrolase 40 (Usp40).